The primary structure comprises 416 residues: Serine protease inhibitor A3K (416 aa).

Residues 1–20 form the signal peptide; that stretch reads MAFIAALGLLMAGICPAVLC. 4 N-linked (GlcNAc...) asparagine glycosylation sites follow: Asn-102, Asn-182, Asn-220, and Asn-267. The tract at residues 365 to 392 is RCL; sequence GTEGAAATAVTAALKSLPQTIPLLNFNR.

Belongs to the serpin family. In terms of processing, N-glycosylated. In terms of tissue distribution, liver and plasma.

The protein resides in the secreted. Functionally, binds to and inhibits kallikreins. Inhibits trypsin but not chymotrypsin or elastase. The sequence is that of Serine protease inhibitor A3K (Serpina3k) from Rattus norvegicus (Rat).